Here is a 262-residue protein sequence, read N- to C-terminus: NAD-dependent protein deacylase (262 aa).

A Deacetylase sirtuin-type domain is found at 1 to 262 (MSNLRRAAEA…AALSPPGVPT (262 aa)). 22-42 (GAGISADSGIPTFRDKLTGLW) is a binding site for NAD(+). Substrate is bound by residues tyrosine 67 and arginine 70. 101 to 104 (QNID) is a binding site for NAD(+). Histidine 119 acts as the Proton acceptor in catalysis. The Zn(2+) site is built by cysteine 127, cysteine 130, cysteine 155, and cysteine 158. NAD(+) contacts are provided by residues 195–197 (GTS), 221–223 (NLE), and alanine 239.

This sequence belongs to the sirtuin family. Class III subfamily. It depends on Zn(2+) as a cofactor.

It is found in the cytoplasm. The enzyme catalyses N(6)-acetyl-L-lysyl-[protein] + NAD(+) + H2O = 2''-O-acetyl-ADP-D-ribose + nicotinamide + L-lysyl-[protein]. It carries out the reaction N(6)-succinyl-L-lysyl-[protein] + NAD(+) + H2O = 2''-O-succinyl-ADP-D-ribose + nicotinamide + L-lysyl-[protein]. In terms of biological role, NAD-dependent lysine deacetylase and desuccinylase that specifically removes acetyl and succinyl groups on target proteins. Modulates the activities of several proteins which are inactive in their acylated form. The protein is NAD-dependent protein deacylase of Pseudomonas putida (strain ATCC 47054 / DSM 6125 / CFBP 8728 / NCIMB 11950 / KT2440).